Reading from the N-terminus, the 420-residue chain is Glucose-1-phosphate adenylyltransferase (420 aa).

Alpha-D-glucose 1-phosphate contacts are provided by residues tyrosine 107, glycine 173, 188–189 (EK), and serine 206.

It belongs to the bacterial/plant glucose-1-phosphate adenylyltransferase family. Homotetramer.

It catalyses the reaction alpha-D-glucose 1-phosphate + ATP + H(+) = ADP-alpha-D-glucose + diphosphate. The protein operates within glycan biosynthesis; glycogen biosynthesis. Its function is as follows. Involved in the biosynthesis of ADP-glucose, a building block required for the elongation reactions to produce glycogen. Catalyzes the reaction between ATP and alpha-D-glucose 1-phosphate (G1P) to produce pyrophosphate and ADP-Glc. This is Glucose-1-phosphate adenylyltransferase from Shewanella sp. (strain ANA-3).